The chain runs to 99 residues: Large ribosomal subunit protein bL21 (99 aa).

Belongs to the bacterial ribosomal protein bL21 family. In terms of assembly, part of the 50S ribosomal subunit. Contacts protein L20.

This protein binds to 23S rRNA in the presence of protein L20. The polypeptide is Large ribosomal subunit protein bL21 (Anaplasma phagocytophilum (strain HZ)).